A 63-amino-acid polypeptide reads, in one-letter code: DNA-directed RNA polymerase 7 kDa subunit (63 aa).

It belongs to the poxviridae DNA-directed RNA polymerase 7 kDa subunit family. The DNA-dependent RNA polymerase (vRNAP) consists of eight subunits encoded by early viral genes and termed according to their apparent molecular masses Rpo147, Rpo132, Rpo35, Rpo30, Rpo22, Rpo19, Rpo18, and Rpo7. The same holoenzyme, with the addition of the transcription-specificity factor RAP94, is used for early gene expression.

It is found in the virion. The catalysed reaction is RNA(n) + a ribonucleoside 5'-triphosphate = RNA(n+1) + diphosphate. Its function is as follows. Part of the DNA-dependent RNA polymerase which catalyzes the transcription of viral DNA into RNA using the four ribonucleoside triphosphates as substrates. Responsible for the transcription of early, intermediate and late genes. DNA-dependent RNA polymerase associates with the early transcription factor (ETF), itself composed of OPG118 and OPG134, thereby allowing the early genes transcription. Late transcription, and probably also intermediate transcription, require newly synthesized RNA polymerase. The protein is DNA-directed RNA polymerase 7 kDa subunit (OPG090) of Monkeypox virus.